Reading from the N-terminus, the 311-residue chain is CD-NTase-associated protein 6 (311 aa).

Residues 84 to 89 (GSGKTE) and 215 to 216 (RR) contribute to the ATP site.

It belongs to the AAA ATPase family. Homohexamer. Forms a 1:1:6 CdnC:Cap7:Cap6 complex.

In terms of biological role, regulates complex assembly in a CBASS antivirus system. CBASS (cyclic oligonucleotide-based antiphage signaling system) provides immunity against bacteriophage. The CD-NTase protein synthesizes cyclic nucleotides in response to infection; these serve as specific second messenger signals. The signals activate a diverse range of effectors, leading to bacterial cell death and thus abortive phage infection. A type III-C(AAA) CBASS system. Binds and disassembles an active CdnC:Cap7 (Cap7 is also called HORMA) complex, inhibiting the complex's ability to synthesize cyclic nucleotide second messengers. An AAA+-ATPase remodeler, in the absence of foreign threat Cap6 (also called Trip13) probably maintains the Cap7 protein in its open, inactive state. Once activated (presumably by a bacteriophage protein) Cap7 binds to and activates its cognate CD-NTase (CdnC in this bacteria) to synthesize cAAA, a cyclic nucleotide second messenger. cAAA activates the NucC endonuclease which degrades all DNA in the infected cell, causing cell death and abortive phage infection. Functionally, protects E.coli strain JP313 against bacteriophage lambda cI- infection. When the cdnC-cap7-cap6-nucC operon is transformed into a susceptible E.coli strain it confers bacteriophage lambda cI- immunity. Mutations in the sensor (Cap7 also called HORMA) or effector proteins (CdnC, NucC) but not the disassembly protein (Cap6 also called Trip13) no longer confer immunity. The presence of the intact operon leads to culture collapse and cell death, which occurs before the phage has finished its replication cycle, thus protecting non-infected bacteria by aborting the phage infection and preventing its propagation. The protein is CD-NTase-associated protein 6 of Escherichia coli (strain MS 115-1).